Consider the following 295-residue polypeptide: Mycothiol acetyltransferase (295 aa).

2 consecutive N-acetyltransferase domains span residues 4–138 (TEWR…RPLT) and 149–295 (VRIA…YAAN). Aspartate 36 contacts 1D-myo-inositol 2-(L-cysteinylamino)-2-deoxy-alpha-D-glucopyranoside. Acetyl-CoA is bound by residues 77–79 (LVV) and 85–90 (RRGIGA). The 1D-myo-inositol 2-(L-cysteinylamino)-2-deoxy-alpha-D-glucopyranoside site is built by glutamate 176, lysine 217, and glutamate 225. Residues 229 to 231 (VGV) and 236 to 242 (QGRGLGY) each bind acetyl-CoA. Residue tyrosine 266 coordinates 1D-myo-inositol 2-(L-cysteinylamino)-2-deoxy-alpha-D-glucopyranoside. Position 271–276 (271–276 (NSAAVN)) interacts with acetyl-CoA.

Belongs to the acetyltransferase family. MshD subfamily. Monomer.

It catalyses the reaction 1D-myo-inositol 2-(L-cysteinylamino)-2-deoxy-alpha-D-glucopyranoside + acetyl-CoA = mycothiol + CoA + H(+). In terms of biological role, catalyzes the transfer of acetyl from acetyl-CoA to desacetylmycothiol (Cys-GlcN-Ins) to form mycothiol. This chain is Mycothiol acetyltransferase (mshD), found in Mycolicibacterium smegmatis (strain ATCC 700084 / mc(2)155) (Mycobacterium smegmatis).